The chain runs to 232 residues: Ribonuclease 3 (232 aa).

In terms of domain architecture, RNase III spans 5-134; it reads QTVLKNHFAI…FLGALLLDKD (130 aa). Position 47 (Glu47) interacts with Mg(2+). Asp51 is an active-site residue. Positions 120 and 123 each coordinate Mg(2+). The active site involves Glu123. Residues 160 to 229 enclose the DRBM domain; it reads DYKTHLQELL…AKNAVEKGLD (70 aa).

Belongs to the ribonuclease III family. In terms of assembly, homodimer. Mg(2+) is required as a cofactor.

Its subcellular location is the cytoplasm. The enzyme catalyses Endonucleolytic cleavage to 5'-phosphomonoester.. Digests double-stranded RNA. Involved in the processing of primary rRNA transcript to yield the immediate precursors to the large and small rRNAs (23S and 16S). Processes some mRNAs, and tRNAs when they are encoded in the rRNA operon. Processes pre-crRNA and tracrRNA of type II CRISPR loci if present in the organism. This chain is Ribonuclease 3, found in Streptococcus pneumoniae (strain Hungary19A-6).